The primary structure comprises 209 residues: Protein GrpE (209 aa).

Positions 1–13 (MSNDSSKAKQNQV) are enriched in polar residues. Residues 1–27 (MSNDSSKAKQNQVDEAVEGEIITDNEN) are disordered. The segment covering 15–27 (EAVEGEIITDNEN) has biased composition (acidic residues).

This sequence belongs to the GrpE family. In terms of assembly, homodimer.

The protein localises to the cytoplasm. In terms of biological role, participates actively in the response to hyperosmotic and heat shock by preventing the aggregation of stress-denatured proteins, in association with DnaK and GrpE. It is the nucleotide exchange factor for DnaK and may function as a thermosensor. Unfolded proteins bind initially to DnaJ; upon interaction with the DnaJ-bound protein, DnaK hydrolyzes its bound ATP, resulting in the formation of a stable complex. GrpE releases ADP from DnaK; ATP binding to DnaK triggers the release of the substrate protein, thus completing the reaction cycle. Several rounds of ATP-dependent interactions between DnaJ, DnaK and GrpE are required for fully efficient folding. This chain is Protein GrpE, found in Shewanella sediminis (strain HAW-EB3).